The chain runs to 372 residues: Alpha-1-antitrypsin homolog (372 aa).

An N-terminal signal peptide occupies residues 1–19 (MPATCLLHTMLTLPSPSTR). 2 N-linked (GlcNAc...) asparagine glycosylation sites follow: Asn-214 and Asn-226. Positions 328-347 (AATTIEIMPMSLPDTVILNR) are RCL.

Belongs to the serpin family.

It is found in the secreted. In Cyprinus carpio (Common carp), this protein is Alpha-1-antitrypsin homolog.